Consider the following 118-residue polypeptide: MRSAKLKFEKRRSRIRHKISKTSNRVRLSIFKSCRHIYAQIIDDSRSITIASASTLDEKITTLKKSYCNIDNAIKVGEAIAKKADSAGIKEVVFDRGGYKYHGVVKALADAAREKIKF.

It belongs to the universal ribosomal protein uL18 family. As to quaternary structure, part of the 50S ribosomal subunit; part of the 5S rRNA/L5/L18/L25 subcomplex. Contacts the 5S and 23S rRNAs.

Its function is as follows. This is one of the proteins that bind and probably mediate the attachment of the 5S RNA into the large ribosomal subunit, where it forms part of the central protuberance. The sequence is that of Large ribosomal subunit protein uL18 from Rickettsia akari (strain Hartford).